The sequence spans 814 residues: Plakophilin-2 (814 aa).

The tract at residues 1–329 (MAIPGSLGEC…MTLERAVNML (329 aa)) is required for binding to single-stranded DNA. Ser-44 is modified (phosphoserine). Arg-46 is subject to Omega-N-methylarginine. 2 positions are modified to phosphoserine: Ser-82 and Ser-130. 8 ARM repeats span residues 200–240 (TCQH…SIKG), 309–352 (CDCL…ESFQ), 354–393 (SEAR…NLVF), 503–549 (PDGR…NLSY), 604–644 (PRGI…NLTA), 652–691 (SVAR…NLSR), 696–737 (QNEI…NLMQ), and 740–782 (YQNA…SLWA).

Belongs to the beta-catenin family. As to quaternary structure, interacts with DSC2. Interacts with JUP. Interacts with KRT5/CK5, KRT8/CK8, KRT14/CK14, KRT18/CK18 and VIM. Interacts (via N-terminus) with MARK3/C-TAK1. Interacts with DSP. Interacts with DSG1, DSG2 and DSG3. Interacts (via N-terminus) with CTNNB1. Interacts with CDH1. Interacts with the RNA polymerase III (Pol III) complex proteins POLR3A/RPC155, POLR3F/RPC39 and POLR3C/RPC82. Interacts with CTNNA3. Interacts (via N-terminus) with SCN5A/Nav1.5. Interacts with ANK3/ANKG and GJA1/CX43. In terms of tissue distribution, expressed in the heart (at protein level).

It is found in the nucleus. It localises to the cell junction. The protein localises to the desmosome. Its subcellular location is the cytoplasm. Its function is as follows. A component of desmosome cell-cell junctions which are required for positive regulation of cellular adhesion. Regulates focal adhesion turnover resulting in changes in focal adhesion size, cell adhesion and cell spreading, potentially via transcriptional modulation of beta-integrins. Required to maintain gingival epithelial barrier function. Important component of the desmosome that is also required for localization of desmosome component proteins such as DSC2, DSG2 and JUP to the desmosome cell-cell junction. Required for the formation of desmosome cell junctions in cardiomyocytes, thereby required for the correct formation of the heart, specifically trabeculation and formation of the atria walls. Loss of desmosome cell junctions leads to mis-localization of DSP and DSG2 resulting in disruption of cell-cell adhesion and disordered intermediate filaments. Modulates profibrotic gene expression in cardiomyocytes via regulation of DSP expression and subsequent activation of downstream TGFB1 and MAPK14/p38 MAPK signaling. Required for cardiac sodium current propagation and electrical synchrony in cardiac myocytes, via ANK3 stabilization and modulation of SCN5A/Nav1.5 localization to cell-cell junctions. Required for mitochondrial function, nuclear envelope integrity and positive regulation of SIRT3 transcription via maintaining DES localization at its nuclear envelope and cell tip anchoring points, and thereby preserving regulation of the transcriptional program. Maintenance of nuclear envelope integrity protects against DNA damage and transcriptional dysregulation of genes, especially those involved in the electron transport chain, thereby preserving mitochondrial function and protecting against superoxide radical anion generation. Binds single-stranded DNA (ssDNA). May regulate the localization of GJA1 to gap junctions in intercalated disks of the heart. The protein is Plakophilin-2 of Rattus norvegicus (Rat).